An 81-amino-acid polypeptide reads, in one-letter code: U10-myrmicitoxin-Mri1b (81 aa).

A signal peptide spans 1 to 26; sequence MRLSYISLTLAIIFVMAIVHAPETEA. A propeptide spanning residues 27–52 is cleaved from the precursor; that stretch reads KAYPEADAVAEAIAVGEADAVGVADP. Valine amide is present on Val80.

The protein belongs to the formicidae venom precursor-01 superfamily. Expressed by the venom gland.

It is found in the secreted. Induces paralysis after injection into blowflies (L.caesar), and then death within 24 hours. May have antimicrobial properties, like most ant linear peptides. The protein is U10-myrmicitoxin-Mri1b of Manica rubida (European giant red ant).